Consider the following 265-residue polypeptide: 3-methyl-2-oxobutanoate hydroxymethyltransferase (265 aa).

Residues D44 and D83 each coordinate Mg(2+). 3-methyl-2-oxobutanoate is bound by residues 44 to 45, D83, and K113; that span reads DS. E115 provides a ligand contact to Mg(2+). E182 serves as the catalytic Proton acceptor.

The protein belongs to the PanB family. Homodecamer; pentamer of dimers. The cofactor is Mg(2+).

The protein localises to the cytoplasm. The catalysed reaction is 3-methyl-2-oxobutanoate + (6R)-5,10-methylene-5,6,7,8-tetrahydrofolate + H2O = 2-dehydropantoate + (6S)-5,6,7,8-tetrahydrofolate. It functions in the pathway cofactor biosynthesis; (R)-pantothenate biosynthesis; (R)-pantoate from 3-methyl-2-oxobutanoate: step 1/2. Its function is as follows. Catalyzes the reversible reaction in which hydroxymethyl group from 5,10-methylenetetrahydrofolate is transferred onto alpha-ketoisovalerate to form ketopantoate. This chain is 3-methyl-2-oxobutanoate hydroxymethyltransferase, found in Aquifex aeolicus (strain VF5).